The following is a 403-amino-acid chain: MDTKAFKRSLQQSENYHRKGFGQTEAAMGVMNTEYQSSLIQQIRQNNYQWKQGNVTIHLAQAFGFCWGVERAVAMAYETRQHFPKESIWITNELIHHPSVNQRLEQMEIKFIEVINGQKDFSQIKSGDVVILPAFGASVSEMQLLNDRGCTIVDTTCPWVSKVWNSVEKHKKRHYTSIIHGKYRHEETVATSSFAGTYLVVLNLEQATYVCDYILKGGNKEEFLAKFKNAYSEGFDPDTDLEKVGIANQTTMLKSETEQIGKLFEGTMLKKYGPAVINDHFMSFNTICDATQERQDAMLELVKEKLDLMVVIGGFNSSNTTHLQEIPIYQGITSYHIDNATRIKPNNCIEHKPLGKDLEIKENWLPEGSIVVGITSGASTPDIIVEAVIEKIFSAKELEYQSN.

Residue cysteine 66 coordinates [4Fe-4S] cluster. Histidine 96 contributes to the (2E)-4-hydroxy-3-methylbut-2-enyl diphosphate binding site. Histidine 96 contributes to the dimethylallyl diphosphate binding site. Histidine 96 contributes to the isopentenyl diphosphate binding site. Residue cysteine 157 participates in [4Fe-4S] cluster binding. Histidine 185 is a (2E)-4-hydroxy-3-methylbut-2-enyl diphosphate binding site. Residue histidine 185 coordinates dimethylallyl diphosphate. Histidine 185 lines the isopentenyl diphosphate pocket. Glutamate 187 (proton donor) is an active-site residue. Residue threonine 250 participates in (2E)-4-hydroxy-3-methylbut-2-enyl diphosphate binding. Cysteine 288 lines the [4Fe-4S] cluster pocket. (2E)-4-hydroxy-3-methylbut-2-enyl diphosphate contacts are provided by serine 317, serine 318, asparagine 319, and serine 379. Residues serine 317, serine 318, asparagine 319, and serine 379 each coordinate dimethylallyl diphosphate. The isopentenyl diphosphate site is built by serine 317, serine 318, asparagine 319, and serine 379.

This sequence belongs to the IspH family. Requires [4Fe-4S] cluster as cofactor.

It catalyses the reaction isopentenyl diphosphate + 2 oxidized [2Fe-2S]-[ferredoxin] + H2O = (2E)-4-hydroxy-3-methylbut-2-enyl diphosphate + 2 reduced [2Fe-2S]-[ferredoxin] + 2 H(+). It carries out the reaction dimethylallyl diphosphate + 2 oxidized [2Fe-2S]-[ferredoxin] + H2O = (2E)-4-hydroxy-3-methylbut-2-enyl diphosphate + 2 reduced [2Fe-2S]-[ferredoxin] + 2 H(+). The protein operates within isoprenoid biosynthesis; dimethylallyl diphosphate biosynthesis; dimethylallyl diphosphate from (2E)-4-hydroxy-3-methylbutenyl diphosphate: step 1/1. It participates in isoprenoid biosynthesis; isopentenyl diphosphate biosynthesis via DXP pathway; isopentenyl diphosphate from 1-deoxy-D-xylulose 5-phosphate: step 6/6. In terms of biological role, catalyzes the conversion of 1-hydroxy-2-methyl-2-(E)-butenyl 4-diphosphate (HMBPP) into a mixture of isopentenyl diphosphate (IPP) and dimethylallyl diphosphate (DMAPP). Acts in the terminal step of the DOXP/MEP pathway for isoprenoid precursor biosynthesis. This is 4-hydroxy-3-methylbut-2-enyl diphosphate reductase from Rippkaea orientalis (strain PCC 8801 / RF-1) (Cyanothece sp. (strain PCC 8801)).